The following is a 335-amino-acid chain: Beta-ketoacyl-[acyl-carrier-protein] synthase III (335 aa).

Catalysis depends on residues C116 and H256. An ACP-binding region spans residues 257 to 261 (QANLR). Residue N286 is part of the active site.

The protein belongs to the thiolase-like superfamily. FabH family. As to quaternary structure, homodimer.

Its subcellular location is the cytoplasm. It catalyses the reaction malonyl-[ACP] + acetyl-CoA + H(+) = 3-oxobutanoyl-[ACP] + CO2 + CoA. It participates in lipid metabolism; fatty acid biosynthesis. Catalyzes the condensation reaction of fatty acid synthesis by the addition to an acyl acceptor of two carbons from malonyl-ACP. Catalyzes the first condensation reaction which initiates fatty acid synthesis and may therefore play a role in governing the total rate of fatty acid production. Possesses both acetoacetyl-ACP synthase and acetyl transacylase activities. Its substrate specificity determines the biosynthesis of branched-chain and/or straight-chain of fatty acids. This is Beta-ketoacyl-[acyl-carrier-protein] synthase III from Porphyromonas gingivalis (strain ATCC 33277 / DSM 20709 / CIP 103683 / JCM 12257 / NCTC 11834 / 2561).